The following is a 256-amino-acid chain: NAD-dependent protein deacylase 4 (256 aa).

One can recognise a Deacetylase sirtuin-type domain in the interval Met-1–Gly-250. Gly-19–Trp-39 is an NAD(+) binding site. Substrate-binding residues include Tyr-64 and Arg-67. An NAD(+)-binding site is contributed by Gln-98–Asp-101. His-116 serves as the catalytic Proton acceptor. Zn(2+)-binding residues include Cys-124, Cys-127, Cys-152, and Cys-155. NAD(+)-binding positions include Gly-192 to Ser-194, Asn-218 to Val-220, and Ala-236.

It belongs to the sirtuin family. Class III subfamily. Zn(2+) is required as a cofactor.

Its subcellular location is the cytoplasm. It carries out the reaction N(6)-acetyl-L-lysyl-[protein] + NAD(+) + H2O = 2''-O-acetyl-ADP-D-ribose + nicotinamide + L-lysyl-[protein]. The enzyme catalyses N(6)-succinyl-L-lysyl-[protein] + NAD(+) + H2O = 2''-O-succinyl-ADP-D-ribose + nicotinamide + L-lysyl-[protein]. NAD-dependent lysine deacetylase and desuccinylase that specifically removes acetyl and succinyl groups on target proteins. Modulates the activities of several proteins which are inactive in their acylated form. The protein is NAD-dependent protein deacylase 4 of Pseudomonas syringae pv. tomato (strain ATCC BAA-871 / DC3000).